We begin with the raw amino-acid sequence, 99 residues long: Prostate and testis expressed protein 14 (99 aa).

The N-terminal stretch at 1 to 21 is a signal peptide; that stretch reads MEKYLLLLLLGIFLRVGFLQA. A UPAR/Ly6 domain is found at 22–99; the sequence is LTCVSCGRLN…CDHQNLCNKP (78 aa). 5 disulfides stabilise this stretch: cysteine 24–cysteine 51, cysteine 27–cysteine 36, cysteine 43–cysteine 69, cysteine 73–cysteine 89, and cysteine 90–cysteine 96. N-linked (GlcNAc...) asparagine glycosylation occurs at asparagine 31. Residue asparagine 75 is glycosylated (N-linked (GlcNAc...) asparagine).

It belongs to the PATE family. As to quaternary structure, monomer. Post-translationally, glycosylated. As to expression, predominantly expressed in the seminal vesicles. Expressed in prostate, and to a lesser extent in the cauda epididymis.

The protein resides in the secreted. In Mus musculus (Mouse), this protein is Prostate and testis expressed protein 14.